The sequence spans 129 residues: Small ribosomal subunit protein uS11 (129 aa).

This sequence belongs to the universal ribosomal protein uS11 family. In terms of assembly, part of the 30S ribosomal subunit. Interacts with proteins S7 and S18. Binds to IF-3.

Functionally, located on the platform of the 30S subunit, it bridges several disparate RNA helices of the 16S rRNA. Forms part of the Shine-Dalgarno cleft in the 70S ribosome. This is Small ribosomal subunit protein uS11 from Erythrobacter litoralis (strain HTCC2594).